The following is a 216-amino-acid chain: Ras-related protein Rab-5C (216 aa).

Positions 30, 31, 33, 34, 35, 36, 47, 48, 53, and 79 each coordinate GTP. Residue serine 35 coordinates Mg(2+). Short sequence motifs (switch) lie at residues 45–57 and 78–94; these read QFHE…IGAA and AGQE…YRGA. Threonine 53 serves as a coordination point for Mg(2+). Serine 85 bears the Phosphoserine mark. GTP-binding residues include asparagine 134, lysine 135, aspartate 137, alanine 165, and lysine 166. A disordered region spans residues 185 to 216; it reads NEPQNAAGAPGRNRGVDLQENNPASRSQCCSN. Polar residues predominate over residues 203–216; that stretch reads QENNPASRSQCCSN. Residues cysteine 213 and cysteine 214 are each lipidated (S-geranylgeranyl cysteine).

Belongs to the small GTPase superfamily. Rab family. In terms of assembly, interacts with EEA1 and INCA1. Interacts with GDI1, GDI2, CHML and CHM; phosphorylation at Ser-85 disrupts this interaction. Requires Mg(2+) as cofactor. Phosphorylation of Ser-85 in the switch II region by LRRK2 prevents the association of RAB regulatory proteins, including CHM, CHML and RAB GDP dissociation inhibitors GDI1 and GDI2.

The protein resides in the cell membrane. It is found in the early endosome membrane. The protein localises to the melanosome. The catalysed reaction is GTP + H2O = GDP + phosphate + H(+). With respect to regulation, regulated by guanine nucleotide exchange factors (GEFs) which promote the exchange of bound GDP for free GTP. Regulated by GTPase activating proteins (GAPs) which increase the GTP hydrolysis activity. Inhibited by GDP dissociation inhibitors (GDIs). The small GTPases Rab are key regulators of intracellular membrane trafficking, from the formation of transport vesicles to their fusion with membranes. Rabs cycle between an inactive GDP-bound form and an active GTP-bound form that is able to recruit to membranes different sets of downstream effectors directly responsible for vesicle formation, movement, tethering and fusion. The chain is Ras-related protein Rab-5C (RAB5C) from Bos taurus (Bovine).